The following is a 306-amino-acid chain: uncharacterized protein (306 aa).

Residues D287–S306 are disordered.

This sequence belongs to the aldo/keto reductase family.

It localises to the cytoplasm. The protein localises to the nucleus. This is an uncharacterized protein from Schizosaccharomyces pombe (strain 972 / ATCC 24843) (Fission yeast).